The sequence spans 923 residues: Rap guanine nucleotide exchange factor 3 (923 aa).

Serine 79 carries the phosphoserine modification. The region spanning 110-186 is the DEP domain; sequence ATCPNLIRDR…RDAQFYRFPG (77 aa). The interval 218-242 is interaction with PDE3B; it reads TVALRKPPGQRTDEELDLIFEELLH. 3',5'-cyclic AMP contacts are provided by residues 311–314 and 321–322; these read GQLA and RA. The N-terminal Ras-GEF domain occupies 384 to 518; the sequence is NRYTVMSGTP…EQWPERRRCH (135 aa). Residues 398 to 422 are interaction with PDE3B; sequence ELLLEAMGPDSSAHDPTETFLSDFL. Phosphoserine occurs at positions 528 and 864. The Ras-GEF domain occupies 662–889; it reads SAKDLAGQLT…ARISTCSEQS (228 aa).

As to quaternary structure, interacts with PDE3B and PIK3R6; form a signaling complex that regulates phosphatidylinositol 3-kinase gamma in angiogenesis. In terms of tissue distribution, widely expressed with highest levels in adult kidney, heart, thyroid and brain, and fetal kidney.

The protein localises to the endomembrane system. In terms of biological role, guanine nucleotide exchange factor (GEF) for RAP1A and RAP2A small GTPases that is activated by binding cAMP. Through simultaneous binding of PDE3B to RAPGEF3 and PIK3R6 is assembled in a signaling complex in which it activates the PI3K gamma complex and which is involved in angiogenesis. Plays a role in the modulation of the cAMP-induced dynamic control of endothelial barrier function through a pathway that is independent on Rho-mediated signaling. Required for the actin rearrangement at cell-cell junctions, such as stress fibers and junctional actin. The sequence is that of Rap guanine nucleotide exchange factor 3 (RAPGEF3) from Homo sapiens (Human).